The primary structure comprises 229 residues: MKRKLAKLVLVRHGESVANRDNVYTGWNDVPLSKKGIAQAKNAGLKVEKIAEFAPTHIHTSVLSRAIMTANIIADVCSFLYLPITKTWRLNERHYGALRGINKDVSKKIFGTNQVLEWRRGFDSVPPLLTQPVQDRRYQKYDMRLMPQGESLHQTQERLMPYFWDHIAPELMAGHDQLVVAHGSSLRALIKKIEDISNEDIVKVEVPNAEPIVYTFDTDLHIVKKEILH.

Residues 12-19, 25-26, Arg65, 92-95, Lys103, and 119-120 each bind substrate; these read RHGESVAN, TG, ERHY, and RR. His13 functions as the Tele-phosphohistidine intermediate in the catalytic mechanism. The active-site Proton donor/acceptor is the Glu92.

This sequence belongs to the phosphoglycerate mutase family. BPG-dependent PGAM subfamily.

The catalysed reaction is (2R)-2-phosphoglycerate = (2R)-3-phosphoglycerate. The protein operates within carbohydrate degradation; glycolysis; pyruvate from D-glyceraldehyde 3-phosphate: step 3/5. Its function is as follows. Catalyzes the interconversion of 2-phosphoglycerate and 3-phosphoglycerate. The polypeptide is 2,3-bisphosphoglycerate-dependent phosphoglycerate mutase 2 (Lactobacillus johnsonii (strain CNCM I-12250 / La1 / NCC 533)).